The following is a 307-amino-acid chain: Carbamate kinase (307 aa).

It belongs to the carbamate kinase family.

The protein resides in the cytoplasm. It catalyses the reaction hydrogencarbonate + NH4(+) + ATP = carbamoyl phosphate + ADP + H2O + H(+). The protein operates within metabolic intermediate metabolism; carbamoyl phosphate degradation; CO(2) and NH(3) from carbamoyl phosphate: step 1/1. Its function is as follows. Carbamate kinase involved in the arginine deiminase pathway of fermentative arginine utilization. In Halobacterium salinarum (strain ATCC 700922 / JCM 11081 / NRC-1) (Halobacterium halobium), this protein is Carbamate kinase (arcC).